The primary structure comprises 990 residues: Presequence protease, mitochondrial (990 aa).

A mitochondrion-targeting transit peptide spans 1-25 (MLRLKSLKKPVQAVVRRFATTSAPT). Zn(2+) is bound at residue histidine 89. The active-site Proton acceptor is glutamate 92. Position 93 (histidine 93) interacts with Zn(2+). Glutamate 165 is an active-site residue. Zn(2+) is bound at residue glutamate 190.

This sequence belongs to the peptidase M16 family. PreP subfamily. Monomer and homodimer; homodimerization is induced by binding of the substrate. The cofactor is Zn(2+).

The protein resides in the mitochondrion intermembrane space. It localises to the mitochondrion matrix. In terms of biological role, degrades mitochondrial transit peptides after their cleavage in the intermembrane space or in the matrix, and presequence peptides; clearance of these peptides is required to keep the presequence processing machinery running. Preferentially cleaves the N-terminal side of paired basic amino acid residues. Also degrades other unstructured peptides. May function as an ATP-dependent peptidase as opposed to a metalloendopeptidase. In Yarrowia lipolytica (strain CLIB 122 / E 150) (Yeast), this protein is Presequence protease, mitochondrial (CYM1).